Here is a 346-residue protein sequence, read N- to C-terminus: DNA repair protein XRCC3 (346 aa).

Residue M1 is modified to N-acetylmethionine. 107 to 114 (GRSSAGKT) contacts ATP.

This sequence belongs to the RecA family. RAD51 subfamily. In terms of assembly, interacts with RAD51C and RAD51. Part of the CX3 complex consisting of RAD51C and XRCC3; the complex has a ring-like structure arranged into a flat disk around a central channel; CX3 can interact with RAD51 in vitro. Forms a complex with FANCD2, BRCA2 and phosphorylated FANCG. Interacts with SWSAP1 and ZSWIM7; involved in homologous recombination repair. Interacts directly with PALB2 which may serve as a scaffold for a HR complex containing PALB2, BRCA2, RAD51C, RAD51 and XRCC3.

It localises to the nucleus. The protein resides in the cytoplasm. It is found in the perinuclear region. Its subcellular location is the mitochondrion. Functionally, involved in the homologous recombination repair (HRR) pathway of double-stranded DNA, thought to repair chromosomal fragmentation, translocations and deletions. Part of the RAD51 paralog protein complex CX3 which acts in the BRCA1-BRCA2-dependent HR pathway. Upon DNA damage, CX3 acts downstream of RAD51 recruitment; the complex binds predominantly to the intersection of the four duplex arms of the Holliday junction (HJ) and to junctions of replication forks. Involved in HJ resolution and thus in processing HR intermediates late in the DNA repair process; the function may be linked to the CX3 complex and seems to involve GEN1 during mitotic cell cycle progression. Part of a PALB2-scaffolded HR complex containing BRCA2 and RAD51C and which is thought to play a role in DNA repair by HR. Plays a role in regulating mitochondrial DNA copy number under conditions of oxidative stress in the presence of RAD51 and RAD51C. In Homo sapiens (Human), this protein is DNA repair protein XRCC3 (XRCC3).